Reading from the N-terminus, the 276-residue chain is 5-deoxy-glucuronate isomerase (276 aa).

The protein belongs to the isomerase IolB family.

It catalyses the reaction 5-deoxy-D-glucuronate = 5-dehydro-2-deoxy-D-gluconate. It participates in polyol metabolism; myo-inositol degradation into acetyl-CoA; acetyl-CoA from myo-inositol: step 4/7. Its function is as follows. Involved in the isomerization of 5-deoxy-glucuronate (5DG) to 5-dehydro-2-deoxy-D-gluconate (DKG or 2-deoxy-5-keto-D-gluconate). The protein is 5-deoxy-glucuronate isomerase of Geobacillus kaustophilus (strain HTA426).